Here is an 846-residue protein sequence, read N- to C-terminus: Neurotactin (846 aa).

Positions 1–222 are disordered; that stretch reads MGELEEKETP…EDASDAPPKR (222 aa). The Cytoplasmic segment spans residues 1 to 324; sequence MGELEEKETP…LRGYKCSVDD (324 aa). The segment covering 11–20 has biased composition (low complexity); that stretch reads PTETTAAQQE. Basic and acidic residues predominate over residues 23 to 42; sequence EEPKETDKMLDKKEDAKEKT. T28 is subject to Phosphothreonine; by PKC. Residue T42 is modified to Phosphothreonine. S44 is subject to Phosphoserine. T47 bears the Phosphothreonine mark. Phosphoserine occurs at positions 48 and 52. Residues 63 to 74 are compositionally biased toward basic and acidic residues; it reads AEKKIDDAELAK. S75 is modified (phosphoserine; by PKC). S77 is subject to Phosphoserine. 4 stretches are compositionally biased toward basic and acidic residues: residues 95 to 111, 141 to 155, 163 to 178, and 185 to 205; these read DSAD…EVKP, LLEK…KEAN, GKDE…ERLR, and PSAE…KSEA. A Phosphoserine; by PKC modification is found at S103. S169 bears the Phosphoserine; by PKC mark. Residues S186 and S203 each carry the phosphoserine modification. Phosphothreonine is present on T206. At S256 the chain carries Phosphoserine. The residue at position 259 (T259) is a Phosphothreonine. S263 bears the Phosphoserine mark. A Phosphothreonine modification is found at T269. The chain crosses the membrane as a helical; Signal-anchor for type II membrane protein span at residues 325–346; sequence ALIVFGILLFVLLLGVIGYVLT. At 347–846 the chain is on the extracellular side; the sequence is HETLTSPPLR…DIVPRYARVD (500 aa). Residues N410, N417, and N428 are each glycosylated (N-linked (GlcNAc...) asparagine). 2 disulfides stabilise this stretch: C422–C437 and C600–C605. Residues N636, N691, and N720 are each glycosylated (N-linked (GlcNAc...) asparagine). C738 and C830 are disulfide-bonded.

In the C-terminal section; belongs to the type-B carboxylesterase/lipase family. In terms of tissue distribution, late in embryogenesis, expression is restricted to cells of the peripheral and central nervous system undergoing proliferation and differentiation. Also expressed in larval CNS, mesoderm and imaginal disks.

Its subcellular location is the membrane. Its function is as follows. May mediate or modulate cell adhesion between embryonic cells during development. This Drosophila melanogaster (Fruit fly) protein is Neurotactin (Nrt).